Here is a 199-residue protein sequence, read N- to C-terminus: Recombination protein RecR (199 aa).

A C4-type zinc finger spans residues 57 to 72 (CSICGNITDEDPCAIC). One can recognise a Toprim domain in the interval 80–176 (STILVVEQPK…KVTRLAHGLS (97 aa)).

This sequence belongs to the RecR family.

Functionally, may play a role in DNA repair. It seems to be involved in an RecBC-independent recombinational process of DNA repair. It may act with RecF and RecO. The sequence is that of Recombination protein RecR from Lacticaseibacillus casei (strain BL23) (Lactobacillus casei).